The following is a 141-amino-acid chain: Galactose-6-phosphate isomerase subunit LacA 1 (141 aa).

This sequence belongs to the LacAB/RpiB family. As to quaternary structure, heteromultimeric protein consisting of LacA and LacB.

The catalysed reaction is aldehydo-D-galactose 6-phosphate = keto-D-tagatose 6-phosphate. It participates in carbohydrate metabolism; D-galactose 6-phosphate degradation; D-tagatose 6-phosphate from D-galactose 6-phosphate: step 1/1. The protein is Galactose-6-phosphate isomerase subunit LacA 1 of Streptococcus agalactiae serotype III (strain NEM316).